The sequence spans 399 residues: Phosphoprotein (399 aa).

Composition is skewed to polar residues over residues 30–46 (ATSQ…SSRT) and 82–112 (GRQN…LPSP). The disordered stretch occupies residues 30 to 112 (ATSQSSLNKP…MGSDTQLPSP (83 aa)). The multimerization stretch occupies residues 224–287 (NYASEILDAI…ITTMKIMDPG (64 aa)). A coiled-coil region spans residues 226-253 (ASEILDAIKALEVRLDRIEGKVDKIMLT).

Belongs to the rubulavirus/avulavirus P protein family. Homotetramer. Interacts (via multimerization domain) with polymerase L; this interaction forms the polymerase L-P complex. Interacts (via N-terminus) with N0 (via Ncore); this interaction allows P to chaperon N0 to avoid N polymerization before encapsidation. Interacts (via C-terminus) with N-RNA template; this interaction positions the polymerase on the template for both transcription and replication.

Its function is as follows. Essential cofactor of the RNA polymerase L that plays a central role in the transcription and replication by forming the polymerase complex with RNA polymerase L and recruiting L to the genomic N-RNA template for RNA synthesis. Also plays a central role in the encapsidation of nascent RNA chains by forming the encapsidation complex with the nucleocapsid protein N (N-P complex). Acts as a chaperone for newly synthesized free N protein, so-called N0, allowing encapsidation of nascent RNA chains during replication. The nucleoprotein protein N prevents excessive phosphorylation of P, which leads to down-regulation of viral transcription/ replication. Participates, together with N, in the formation of viral factories (viroplasms), which are large inclusions in the host cytoplasm where replication takes place. This chain is Phosphoprotein (P/V), found in Human parainfluenza 4a virus (strain Toshiba) (HPIV-4a).